The following is a 327-amino-acid chain: Methionyl-tRNA formyltransferase (327 aa).

121 to 124 (SLLP) is a binding site for (6S)-5,6,7,8-tetrahydrofolate.

The protein belongs to the Fmt family.

The catalysed reaction is L-methionyl-tRNA(fMet) + (6R)-10-formyltetrahydrofolate = N-formyl-L-methionyl-tRNA(fMet) + (6S)-5,6,7,8-tetrahydrofolate + H(+). Its function is as follows. Attaches a formyl group to the free amino group of methionyl-tRNA(fMet). The formyl group appears to play a dual role in the initiator identity of N-formylmethionyl-tRNA by promoting its recognition by IF2 and preventing the misappropriation of this tRNA by the elongation apparatus. The protein is Methionyl-tRNA formyltransferase of Burkholderia ambifaria (strain MC40-6).